Consider the following 306-residue polypeptide: Protein SULFUR DEFICIENCY-INDUCED 1 (306 aa).

TPR repeat units follow at residues 1–22, 71–104, 107–140, 167–200, and 202–233; these read MERS…NLMK, DSAL…CSKN, DSLD…IYQG, SRLL…EPDA, and KSCN…RVLG. A coiled-coil region spans residues 72–139; it reads SALKDMAVVM…LKRKLRQIYQ (68 aa). Residues 238-260 are a coiled coil; sequence RTRQRAEELLSELESSLPRMRDA. Residues 270-304 form a TPR 6 repeat; the sequence is LDDDFVLGLEEMTSTSFKSKRLPIFEQISSFRNTL.

This sequence belongs to the MS5 protein family.

It is found in the nucleus. Functionally, involved in the utilization of stored sulfate under sulfur-deficient conditions. This is Protein SULFUR DEFICIENCY-INDUCED 1 from Arabidopsis thaliana (Mouse-ear cress).